The sequence spans 160 residues: SsrA-binding protein (160 aa).

The tract at residues 133-160 (KKEHDKREDLKEREWQRDKERMMKNKGR) is disordered.

The protein belongs to the SmpB family.

It localises to the cytoplasm. Functionally, required for rescue of stalled ribosomes mediated by trans-translation. Binds to transfer-messenger RNA (tmRNA), required for stable association of tmRNA with ribosomes. tmRNA and SmpB together mimic tRNA shape, replacing the anticodon stem-loop with SmpB. tmRNA is encoded by the ssrA gene; the 2 termini fold to resemble tRNA(Ala) and it encodes a 'tag peptide', a short internal open reading frame. During trans-translation Ala-aminoacylated tmRNA acts like a tRNA, entering the A-site of stalled ribosomes, displacing the stalled mRNA. The ribosome then switches to translate the ORF on the tmRNA; the nascent peptide is terminated with the 'tag peptide' encoded by the tmRNA and targeted for degradation. The ribosome is freed to recommence translation, which seems to be the essential function of trans-translation. This is SsrA-binding protein from Tolumonas auensis (strain DSM 9187 / NBRC 110442 / TA 4).